A 166-amino-acid polypeptide reads, in one-letter code: Lipoprotein signal peptidase (166 aa).

Helical transmembrane passes span 12-32 (WLWV…LILQ), 70-90 (WFFS…MYRS), and 102-122 (ALII…GFVV). Active-site residues include aspartate 123 and aspartate 141. A helical membrane pass occupies residues 137–157 (FNLADSAICIGAALIVLEGFL).

This sequence belongs to the peptidase A8 family.

It localises to the cell inner membrane. The enzyme catalyses Release of signal peptides from bacterial membrane prolipoproteins. Hydrolyzes -Xaa-Yaa-Zaa-|-(S,diacylglyceryl)Cys-, in which Xaa is hydrophobic (preferably Leu), and Yaa (Ala or Ser) and Zaa (Gly or Ala) have small, neutral side chains.. The protein operates within protein modification; lipoprotein biosynthesis (signal peptide cleavage). Functionally, this protein specifically catalyzes the removal of signal peptides from prolipoproteins. In Klebsiella pneumoniae subsp. pneumoniae (strain ATCC 700721 / MGH 78578), this protein is Lipoprotein signal peptidase.